Reading from the N-terminus, the 211-residue chain is Protein-L-isoaspartate O-methyltransferase (211 aa).

The active site involves serine 62.

Belongs to the methyltransferase superfamily. L-isoaspartyl/D-aspartyl protein methyltransferase family.

Its subcellular location is the cytoplasm. It carries out the reaction [protein]-L-isoaspartate + S-adenosyl-L-methionine = [protein]-L-isoaspartate alpha-methyl ester + S-adenosyl-L-homocysteine. Its function is as follows. Catalyzes the methyl esterification of L-isoaspartyl residues in peptides and proteins that result from spontaneous decomposition of normal L-aspartyl and L-asparaginyl residues. It plays a role in the repair and/or degradation of damaged proteins. This Shewanella amazonensis (strain ATCC BAA-1098 / SB2B) protein is Protein-L-isoaspartate O-methyltransferase.